A 456-amino-acid polypeptide reads, in one-letter code: Bifunctional protein GlmU (456 aa).

The segment at 1-229 is pyrophosphorylase; it reads MLNNTMSVVI…ISETDGVNNR (229 aa). UDP-N-acetyl-alpha-D-glucosamine contacts are provided by residues 11-14, K25, Q76, 81-82, 103-105, G140, E154, N169, and N227; these read LAAG, GT, and YGD. Residue D105 participates in Mg(2+) binding. N227 lines the Mg(2+) pocket. A linker region spans residues 230–250; sequence LQLSRLERIYQAEQAEKLLLA. Residues 251-456 form an N-acetyltransferase region; it reads GVMLRDPARF…QGWQRPVKKK (206 aa). UDP-N-acetyl-alpha-D-glucosamine is bound by residues R333 and K351. H363 functions as the Proton acceptor in the catalytic mechanism. UDP-N-acetyl-alpha-D-glucosamine contacts are provided by Y366 and N377. Acetyl-CoA contacts are provided by residues A380, 386 to 387, S405, A423, and R440; that span reads NY.

This sequence in the N-terminal section; belongs to the N-acetylglucosamine-1-phosphate uridyltransferase family. It in the C-terminal section; belongs to the transferase hexapeptide repeat family. Homotrimer. It depends on Mg(2+) as a cofactor.

It localises to the cytoplasm. The enzyme catalyses alpha-D-glucosamine 1-phosphate + acetyl-CoA = N-acetyl-alpha-D-glucosamine 1-phosphate + CoA + H(+). It catalyses the reaction N-acetyl-alpha-D-glucosamine 1-phosphate + UTP + H(+) = UDP-N-acetyl-alpha-D-glucosamine + diphosphate. Its pathway is nucleotide-sugar biosynthesis; UDP-N-acetyl-alpha-D-glucosamine biosynthesis; N-acetyl-alpha-D-glucosamine 1-phosphate from alpha-D-glucosamine 6-phosphate (route II): step 2/2. The protein operates within nucleotide-sugar biosynthesis; UDP-N-acetyl-alpha-D-glucosamine biosynthesis; UDP-N-acetyl-alpha-D-glucosamine from N-acetyl-alpha-D-glucosamine 1-phosphate: step 1/1. It functions in the pathway bacterial outer membrane biogenesis; LPS lipid A biosynthesis. Functionally, catalyzes the last two sequential reactions in the de novo biosynthetic pathway for UDP-N-acetylglucosamine (UDP-GlcNAc). The C-terminal domain catalyzes the transfer of acetyl group from acetyl coenzyme A to glucosamine-1-phosphate (GlcN-1-P) to produce N-acetylglucosamine-1-phosphate (GlcNAc-1-P), which is converted into UDP-GlcNAc by the transfer of uridine 5-monophosphate (from uridine 5-triphosphate), a reaction catalyzed by the N-terminal domain. The sequence is that of Bifunctional protein GlmU from Enterobacter sp. (strain 638).